The following is a 163-amino-acid chain: SsrA-binding protein (163 aa).

The segment covering Gly135 to Arg156 has biased composition (basic and acidic residues). A disordered region spans residues Gly135–Arg163.

The protein belongs to the SmpB family.

The protein localises to the cytoplasm. In terms of biological role, required for rescue of stalled ribosomes mediated by trans-translation. Binds to transfer-messenger RNA (tmRNA), required for stable association of tmRNA with ribosomes. tmRNA and SmpB together mimic tRNA shape, replacing the anticodon stem-loop with SmpB. tmRNA is encoded by the ssrA gene; the 2 termini fold to resemble tRNA(Ala) and it encodes a 'tag peptide', a short internal open reading frame. During trans-translation Ala-aminoacylated tmRNA acts like a tRNA, entering the A-site of stalled ribosomes, displacing the stalled mRNA. The ribosome then switches to translate the ORF on the tmRNA; the nascent peptide is terminated with the 'tag peptide' encoded by the tmRNA and targeted for degradation. The ribosome is freed to recommence translation, which seems to be the essential function of trans-translation. This chain is SsrA-binding protein, found in Shewanella loihica (strain ATCC BAA-1088 / PV-4).